The following is a 536-amino-acid chain: Prickle planar cell polarity protein 3-B (536 aa).

The region spanning serine 66 to serine 175 is the PET domain. 3 LIM zinc-binding domains span residues threonine 177 to arginine 241, proline 242 to glutamine 302, and aspartate 305 to serine 366. Residues proline 418–serine 536 form a disordered region. Residues phenylalanine 438–leucine 448 show a composition bias toward basic and acidic residues. Positions aspartate 450–serine 467 are enriched in polar residues. The segment covering serine 474 to serine 487 has biased composition (low complexity).

It belongs to the prickle / espinas / testin family. As to quaternary structure, interacts with vangl2 via its C-terminus. The vangl2-dependent membrane recruitment of prickle3 is a prerequisite for its polarization. Interacts with wtip. Wtip is involved in the recruitment of prickle3 to the basal body.

The protein resides in the cytoplasm. It localises to the cell membrane. The protein localises to the mitochondrion. In terms of biological role, involved in the planar cell polarity (PCP) pathway that is essential for the polarization of epithelial cells during morphogenetic processes, including gastrulation and neurulation. PCP is maintained by two molecular modules, the global and the core modules. Proteins of the core module include the proteins Frizzled (Fz), Disheveled (Dsh), Van Gogh (Vang), Prickle (Pk), Flamingo (Fmi, Celsr) and Diego (Dgo). The core module proteins develop subcellular asymmetry, accumulating in two groups on opposite sides of epithelial cells. Distinct proximal (Vang, Pk and Fmi) and distal (Fz, Dsh, Dgo and Fmi) complexes segregate to opposite sides of the cell, where they interact with the opposite complex in the neighboring cell at or near the adherents junctions. Directional information to orient polarization with respect to the tissue axes is provided by the global module which involves Wnt proteins. Involved in the organization of the basal body. Involved in cilia growth and positioning. Required for proper assembly, stability, and function of mitochondrial membrane ATP synthase (mitochondrial complex V). The chain is Prickle planar cell polarity protein 3-B (prickle3-b) from Xenopus laevis (African clawed frog).